Reading from the N-terminus, the 239-residue chain is Uridylate kinase (239 aa).

13-16 (KVSG) contributes to the ATP binding site. Residue Gly-55 coordinates UMP. ATP contacts are provided by Gly-56 and Arg-60. Residues Asp-75 and 136-143 (TGNPFFTT) each bind UMP. 4 residues coordinate ATP: Thr-163, Gln-164, Tyr-169, and Asp-172.

The protein belongs to the UMP kinase family. As to quaternary structure, homohexamer.

Its subcellular location is the cytoplasm. The catalysed reaction is UMP + ATP = UDP + ADP. It participates in pyrimidine metabolism; CTP biosynthesis via de novo pathway; UDP from UMP (UMPK route): step 1/1. Inhibited by UTP. Its function is as follows. Catalyzes the reversible phosphorylation of UMP to UDP. The protein is Uridylate kinase of Bartonella henselae (strain ATCC 49882 / DSM 28221 / CCUG 30454 / Houston 1) (Rochalimaea henselae).